The primary structure comprises 400 residues: Tyrosine-specific transport system 1 (400 aa).

The next 12 membrane-spanning stretches (helical) occupy residues 5 to 25 (VGST…AMPL), 34 to 54 (FTLV…LLFV), 80 to 100 (IIAT…YISG), 117 to 137 (VSVL…THSV), 143 to 163 (VLFF…LPEI), 176 to 196 (ALII…GSIP), 211 to 231 (FSIL…QLST), 250 to 270 (LNGL…ASAV), 273 to 293 (FSTL…LECI), 313 to 333 (LTFI…ILAL), 335 to 355 (YAGQ…VWKA), and 370 to 390 (NLTL…PFAI).

The protein belongs to the amino acid/polyamine transporter 2 family. Mtr/TnaB/TyrP permease subfamily.

The protein resides in the cell inner membrane. The enzyme catalyses L-tyrosine(in) + H(+)(in) = L-tyrosine(out) + H(+)(out). Functionally, transports tyrosine across the cytoplasmic membrane. The transport system is energized by the proton motive force. In Haemophilus influenzae (strain ATCC 51907 / DSM 11121 / KW20 / Rd), this protein is Tyrosine-specific transport system 1 (tyrP-A).